A 115-amino-acid polypeptide reads, in one-letter code: Transcriptional regulator protein FixT (115 aa).

As to quaternary structure, interacts directly with FixL.

Prevents transcription of the intermediate key regulatory genes nifA and fixK by counteracting the activity of the FixLJ two-component system. Acts as an inhibitor of the sensor hemoprotein kinase fixL, preventing the production or the accumulation of its phosphorylated form. The protein is Transcriptional regulator protein FixT (fixT) of Rhizobium meliloti (strain 1021) (Ensifer meliloti).